Consider the following 298-residue polypeptide: GTP cyclohydrolase FolE2 (298 aa).

The protein belongs to the GTP cyclohydrolase IV family.

The catalysed reaction is GTP + H2O = 7,8-dihydroneopterin 3'-triphosphate + formate + H(+). It participates in cofactor biosynthesis; 7,8-dihydroneopterin triphosphate biosynthesis; 7,8-dihydroneopterin triphosphate from GTP: step 1/1. Functionally, converts GTP to 7,8-dihydroneopterin triphosphate. The protein is GTP cyclohydrolase FolE2 of Neisseria meningitidis serogroup A / serotype 4A (strain DSM 15465 / Z2491).